The sequence spans 130 residues: Small ribosomal subunit protein uS9 (130 aa).

The protein belongs to the universal ribosomal protein uS9 family.

The sequence is that of Small ribosomal subunit protein uS9 from Salmonella paratyphi A (strain AKU_12601).